A 461-amino-acid chain; its full sequence is Phosphoglucosamine mutase (461 aa).

S118 functions as the Phosphoserine intermediate in the catalytic mechanism. Residues S118, D255, D257, and D259 each coordinate Mg(2+). At S118 the chain carries Phosphoserine.

This sequence belongs to the phosphohexose mutase family. It depends on Mg(2+) as a cofactor. Post-translationally, activated by phosphorylation.

It catalyses the reaction alpha-D-glucosamine 1-phosphate = D-glucosamine 6-phosphate. Catalyzes the conversion of glucosamine-6-phosphate to glucosamine-1-phosphate. In Acidothermus cellulolyticus (strain ATCC 43068 / DSM 8971 / 11B), this protein is Phosphoglucosamine mutase.